The following is a 334-amino-acid chain: Glyceraldehyde-3-phosphate dehydrogenase (334 aa).

Residues 12-13 (TI) and Gly-111 contribute to the NAD(+) site. Residue 140 to 142 (SCN) participates in D-glyceraldehyde 3-phosphate binding. Cys-141 acts as the Nucleophile in catalysis. Arg-167 lines the NAD(+) pocket. 192-193 (HG) contributes to the D-glyceraldehyde 3-phosphate binding site. An NAD(+)-binding site is contributed by Gln-298.

Belongs to the glyceraldehyde-3-phosphate dehydrogenase family. Homotetramer.

The protein localises to the cytoplasm. It catalyses the reaction D-glyceraldehyde 3-phosphate + phosphate + NADP(+) = (2R)-3-phospho-glyceroyl phosphate + NADPH + H(+). The catalysed reaction is D-glyceraldehyde 3-phosphate + phosphate + NAD(+) = (2R)-3-phospho-glyceroyl phosphate + NADH + H(+). It participates in carbohydrate degradation; glycolysis; pyruvate from D-glyceraldehyde 3-phosphate: step 1/5. The chain is Glyceraldehyde-3-phosphate dehydrogenase from Thermococcus onnurineus (strain NA1).